The following is a 587-amino-acid chain: Estrogen receptor (587 aa).

Residues 1–176 (MTLHTKTSGV…SMESTKETRY (176 aa)) form a modulating (transactivation AF-1) region. 2 consecutive NR C4-type zinc fingers follow at residues 177–197 (CAVCNDYASGYHYGVWSCEGC) and 213–237 (CPATNQCTIDKNRRKSCQACRLRKC). Residues 177-242 (CAVCNDYASG…RLRKCYEVGM (66 aa)) constitute a DNA-binding region (nuclear receptor). A hinge region spans residues 243-302 (MKGGIRKDRRGGRVMKQKRQREEQDSRNGEASSTELRAPTLWASPLVVKHNKKNSPALSL). Residues 248–277 (RKDRRGGRVMKQKRQREEQDSRNGEASSTE) are disordered. Over residues 249-261 (KDRRGGRVMKQKR) the composition is skewed to basic residues. Positions 303-539 (TAEQMVSALL…DLLLEMLDAH (237 aa)) constitute an NR LBD domain. Positions 303–587 (TAEQMVSALL…KEEENMQNTL (285 aa)) are transactivation AF-2.

It belongs to the nuclear hormone receptor family. NR3 subfamily. As to quaternary structure, binds DNA as a homodimer. Can form a heterodimer with ER-beta.

Its subcellular location is the nucleus. In terms of biological role, the steroid hormones and their receptors are involved in the regulation of eukaryotic gene expression and affect cellular proliferation and differentiation in target tissues. This Taeniopygia guttata (Zebra finch) protein is Estrogen receptor (ESR1).